We begin with the raw amino-acid sequence, 228 residues long: Probable septum site-determining protein MinC (228 aa).

This sequence belongs to the MinC family. As to quaternary structure, interacts with MinD and FtsZ.

Its function is as follows. Cell division inhibitor that blocks the formation of polar Z ring septums. Rapidly oscillates between the poles of the cell to destabilize FtsZ filaments that have formed before they mature into polar Z rings. Prevents FtsZ polymerization. This is Probable septum site-determining protein MinC from Oceanobacillus iheyensis (strain DSM 14371 / CIP 107618 / JCM 11309 / KCTC 3954 / HTE831).